We begin with the raw amino-acid sequence, 69 residues long: Conotoxin Cal12.1p4 (69 aa).

Positions 1–23 are excised as a propeptide; it reads DLITNSYTRGKPRHVTSWRNLKT.

Post-translationally, contains 4 disulfide bonds. In terms of tissue distribution, expressed by the venom duct.

It localises to the secreted. The polypeptide is Conotoxin Cal12.1p4 (Californiconus californicus (California cone)).